Consider the following 482-residue polypeptide: tRNA sulfurtransferase (482 aa).

The THUMP domain occupies Asp-61–Arg-165. ATP contacts are provided by residues Leu-183–Ile-184, Lys-265, Gly-287, and Gln-296. Cys-344 and Cys-456 form a disulfide bridge. In terms of domain architecture, Rhodanese spans Leu-404–Pro-482. Cys-456 functions as the Cysteine persulfide intermediate in the catalytic mechanism.

The protein belongs to the ThiI family.

The protein resides in the cytoplasm. It catalyses the reaction [ThiI sulfur-carrier protein]-S-sulfanyl-L-cysteine + a uridine in tRNA + 2 reduced [2Fe-2S]-[ferredoxin] + ATP + H(+) = [ThiI sulfur-carrier protein]-L-cysteine + a 4-thiouridine in tRNA + 2 oxidized [2Fe-2S]-[ferredoxin] + AMP + diphosphate. It carries out the reaction [ThiS sulfur-carrier protein]-C-terminal Gly-Gly-AMP + S-sulfanyl-L-cysteinyl-[cysteine desulfurase] + AH2 = [ThiS sulfur-carrier protein]-C-terminal-Gly-aminoethanethioate + L-cysteinyl-[cysteine desulfurase] + A + AMP + 2 H(+). It participates in cofactor biosynthesis; thiamine diphosphate biosynthesis. Its function is as follows. Catalyzes the ATP-dependent transfer of a sulfur to tRNA to produce 4-thiouridine in position 8 of tRNAs, which functions as a near-UV photosensor. Also catalyzes the transfer of sulfur to the sulfur carrier protein ThiS, forming ThiS-thiocarboxylate. This is a step in the synthesis of thiazole, in the thiamine biosynthesis pathway. The sulfur is donated as persulfide by IscS. This Edwardsiella ictaluri (strain 93-146) protein is tRNA sulfurtransferase.